Consider the following 86-residue polypeptide: MKTLLLTLVVVTIVCLDLGYTLTCLICPEKYCNKVHTCLNGEKICFKKYDQRKLLGKGYIRGCADTCPKLQNRDVIFCCSTDKCNL.

A signal peptide spans 1–21 (MKTLLLTLVVVTIVCLDLGYT). Intrachain disulfides connect cysteine 24–cysteine 45, cysteine 27–cysteine 32, cysteine 38–cysteine 63, cysteine 67–cysteine 78, and cysteine 79–cysteine 84.

The protein belongs to the three-finger toxin family. Ancestral subfamily. Orphan group II sub-subfamily. As to expression, expressed by the venom gland.

It localises to the secreted. In terms of biological role, binds with low affinity to muscular (alpha-1-beta-1-delta-epsilon/CHRNA1-CHRNB1-CHRND-CHRNE) and very low affinity to neuronal (alpha-7/CHRNA7) nicotinic acetylcholine receptor (nAChR). The sequence is that of Probable weak neurotoxin NNAM3 from Naja atra (Chinese cobra).